A 1632-amino-acid chain; its full sequence is MSNNKQTAAPAATSNEKAENGAEKEAIEKFVEVVRNTPELQGEMFFDGCIIAMTKDAFKGKYRVFYGNGLHTSIMFGAGTAALDLMTPGSFLPPFPQRLIKSREGSAPTMEATDPMMSRVIILMNGECLDVNSELINRPKTMGDDAISNLTDDLNNITPKEGEATVKEWDSLPGGELRYLSKANKPDETYMKDLIEKYFEKAICHNGKKVEDYVFFLVANPIAMVSLARKGFMSNVNMHNYESFENNIVIPADDDELYFGDHTFKVAVNNERLNTSSVANCNAYVRPFFHGCNGFYQGRNKRIYPESHDLYRRDYIKDYNTDYKSLCYSRKTENVMPVCDFISSTAATLVLQKFPLNYVIEHKFTTEDDDYKTKMAMSVKLDLIKEIAIKNRYRPNVFDDNFHVSQDRIYATKYQGHLERNTISPNALHTYKTGGKLGIAGELMEGEKMSQWVHTDIASKFTSMENFNKNGGDEAALCDDEEKELGFGKMYVTSRLSSVFDFKSIFNANRMTTQHELSSQLGDTDTKKEQKEKRSKQGGSKLFNYKIKSAFNPVFNSLKSPAQKILFNMCGDRTLFKSVMEDALFLLRDEIFLEDKLVMTHPAFAESENPNHCQYCKCSFNNGMAGVENKDFCFCYLILRTMCALSAREPTQFNITNLWDKTAFPSELPPTTTETFDYNFNMNVRTIERKNKCSAYGNAVLTDSERENGFADPNLKEENGSKKKLQSYMKEVKLEALIKAVLTAEPTLLHPDQRINMDKITEGDEFYHKLEANRFAKSMGYKQDFTMGSIGPDETPNGSYQLSSIKSIRDVLLKDSKSSVDYELNKFIVVPGKMTHTIKGTKKSDDGDSKTDGSGDMEDDFTSLAKMTNRKRKAGGKDGPSKKKKKDGADKSLEKLARAMLLDLLEISIPNSDASLSLEEQNQEIRKFWREKQIHPDYIFLFPNAEEKRKLTPETTKQLCQKFMKVVGICRDMIRPEPTSSENIRLKLVTTYMAGVRDYIKRLAEFLAKKLNYSSVEEMRGYAMSSIRMKNESVKKTQSSWMDPQSTSDPVQKMMERKITSAYATHRIESANTKVLPYTDSKLIPVCSEIPIPARMILCSVGETESDGCKRLGYNIEGYKRNEKDIKMAGEKQQPHSYLTPLEMKIKMDTFQKEAENIEKEKYVDGNKPETAAREEIFKQVREKEINCGVYIPWEIMAKDLCENAGYKDSDVLDPAVLAHILKRADVKFEKLGNGGFASALNCKTIAKLLAGYLDTMEDVNVTRPSLITNIFSDMDTICSMVNKIGMNMKSFFGSYDYATFDMATFNLKDTLLKMISQEPELGSVLHLLITMATIYGVNTSTNGKLFYKSYERDSQAAVVGIGGILNIFLGMDACKSSNAAREIKQAQRKINPMITTHMDYNMKRGGGIDRWSTLDTAKCQGMSRYLGCYSFSTYPGQQGSNDIYTKLKLSGGFFYNSIPAHICAQSKSHNTNKVTMCLKNSGVLYSSFKRGGRNVDIAELLNRGDLDDINNTILSTNGLAQKIAAYFLSSIGIEPKTNGFPDMGNMSKSMFVRKIVKIHFSEFAEEDGEIMVERKVLKHILGFVYPDDSVVEKPDMFMVYDPSAMDVDEDEDEDMDDESDDESDGEEMSGE.

Residues 1 to 15 (MSNNKQTAAPAATSN) show a composition bias toward polar residues. Positions 1 to 23 (MSNNKQTAAPAATSNEKAENGAE) are disordered. Over 1–63 (MSNNKQTAAP…TKDAFKGKYR (63 aa)) the chain is Cytoplasmic. Residues 64–86 (VFYGNGLHTSIMFGAGTAALDLM) form a helical membrane-spanning segment. The Extracellular segment spans residues 87-1632 (TPGSFLPPFP…ESDGEEMSGE (1546 aa)). 2 N-linked (GlcNAc...) asparagine; by host glycosylation sites follow: N149 and N274. A disordered region spans residues 516–538 (ELSSQLGDTDTKKEQKEKRSKQG). 3 N-linked (GlcNAc...) asparagine; by host glycosylation sites follow: N654, N719, and N797. Residues 838–890 (IKGTKKSDDGDSKTDGSGDMEDDFTSLAKMTNRKRKAGGKDGPSKKKKKDGAD) are disordered. Composition is skewed to basic and acidic residues over residues 842-853 (KKSDDGDSKTDG) and 875-890 (GGKD…DGAD). 6 N-linked (GlcNAc...) asparagine; by host glycosylation sites follow: N1012, N1031, N1261, N1339, N1511, and N1546. Residues 1603 to 1632 (PSAMDVDEDEDEDMDDESDDESDGEEMSGE) form a disordered region. Over residues 1607–1632 (DVDEDEDEDMDDESDDESDGEEMSGE) the composition is skewed to acidic residues.

It is found in the host membrane. This is an uncharacterized protein from Ostreid herpesvirus 1 (isolate France) (OsHV-1).